Here is a 1097-residue protein sequence, read N- to C-terminus: DNA-directed RNA polymerase subunit beta (1097 aa).

The disordered stretch occupies residues 1072-1097 (QDVNPRRSTPSRPTYESLGVADYDED).

It belongs to the RNA polymerase beta chain family. In terms of assembly, in cyanobacteria the RNAP catalytic core is composed of 2 alpha, 1 beta, 1 beta', 1 gamma and 1 omega subunit. When a sigma factor is associated with the core the holoenzyme is formed, which can initiate transcription.

The enzyme catalyses RNA(n) + a ribonucleoside 5'-triphosphate = RNA(n+1) + diphosphate. In terms of biological role, DNA-dependent RNA polymerase catalyzes the transcription of DNA into RNA using the four ribonucleoside triphosphates as substrates. The protein is DNA-directed RNA polymerase subunit beta of Synechococcus sp. (strain CC9902).